Reading from the N-terminus, the 542-residue chain is Nuclear speckle splicing regulatory protein 1 (542 aa).

The interval 21–53 (RVLQKPSVFGSDSDDDETSVSESLQREAAKKQA) is disordered. A phosphoserine mark is found at Ser27, Ser31, and Ser33. A coiled-coil region spans residues 103-172 (IHNLLKAVEI…RAAALEAHLD (70 aa)). Positions 105–169 (NLLKAVEIRK…REKRAAALEA (65 aa)) are necessary for alternative splicing activity. Residues 190–516 (AVGEEAAPKS…FAKRSNEETV (327 aa)) are disordered. Glycyl lysine isopeptide (Lys-Gly) (interchain with G-Cter in SUMO2) cross-links involve residues Lys198 and Lys209. Residues 200 to 217 (SFREARTVIKEEKLRGYP) are compositionally biased toward basic and acidic residues. Residues 223–232 (ESRPPQQSCV) are compositionally biased toward polar residues. The segment covering 239–256 (EAEENPDADREFDDESSE) has biased composition (acidic residues). Phosphoserine occurs at positions 254 and 255. Basic and acidic residues predominate over residues 257 to 271 (DGEKRDHKVKSRGED). Residue Lys277 is modified to N6-acetyllysine. Basic residues predominate over residues 277 to 288 (KHPKHHKNRAHS). A Glycyl lysine isopeptide (Lys-Gly) (interchain with G-Cter in SUMO2) cross-link involves residue Lys280. Composition is skewed to basic and acidic residues over residues 309-335 (RGHE…EEKS), 343-475 (SHKD…KPSH), and 485-501 (RLAE…ERPP). Residues 372-413 (KREKYSSREQERDRQRNDHDRYSEKEKKRKEKEEHTKARRER) adopt a coiled-coil conformation. At Ser443 the chain carries Phosphoserine.

This sequence belongs to the NSRP1 family. Interacts (via C-terminus) with SRSF1. Interacts (via C-terminus) with SRSF2.

Its subcellular location is the nucleus. It localises to the nucleus speckle. Functionally, RNA-binding protein that mediates pre-mRNA alternative splicing regulation. In Mus musculus (Mouse), this protein is Nuclear speckle splicing regulatory protein 1 (Nsrp1).